Reading from the N-terminus, the 320-residue chain is ATP-dependent 6-phosphofructokinase (320 aa).

Residue Gly12 coordinates ATP. Residue 22–26 (RGVVR) participates in ADP binding. ATP-binding positions include 73–74 (RF) and 103–106 (GDGS). Asp104 is a binding site for Mg(2+). 126-128 (TID) is a binding site for substrate. Asp128 functions as the Proton acceptor in the catalytic mechanism. Arg155 contacts ADP. Substrate contacts are provided by residues Arg163 and 170–172 (MGR). ADP is bound by residues 186–188 (GCE), Lys212, and 214–216 (KKH). Substrate-binding positions include Glu223, Arg244, and 250–253 (HIQR).

The protein belongs to the phosphofructokinase type A (PFKA) family. ATP-dependent PFK group I subfamily. Prokaryotic clade 'B1' sub-subfamily. In terms of assembly, homotetramer. It depends on Mg(2+) as a cofactor.

Its subcellular location is the cytoplasm. The catalysed reaction is beta-D-fructose 6-phosphate + ATP = beta-D-fructose 1,6-bisphosphate + ADP + H(+). Its pathway is carbohydrate degradation; glycolysis; D-glyceraldehyde 3-phosphate and glycerone phosphate from D-glucose: step 3/4. With respect to regulation, allosterically activated by ADP and other diphosphonucleosides, and allosterically inhibited by phosphoenolpyruvate. Functionally, catalyzes the phosphorylation of D-fructose 6-phosphate to fructose 1,6-bisphosphate by ATP, the first committing step of glycolysis. The sequence is that of ATP-dependent 6-phosphofructokinase from Vibrio vulnificus (strain CMCP6).